The primary structure comprises 1003 residues: Leucine-rich repeat receptor-like serine/threonine-protein kinase BAM1 (1003 aa).

The signal sequence occupies residues 1–19; it reads MKLFLLLLFLLHISHTFTA. The Extracellular segment spans residues 20–640; that stretch reads SRPISEFRAL…HSKGPLSASM (621 aa). LRR repeat units lie at residues 68 to 92, 93 to 116, 117 to 140, 142 to 165, 166 to 191, 193 to 213, 215 to 238, 239 to 262, 263 to 285, 286 to 310, 312 to 334, 335 to 358, 359 to 382, 385 to 406, 407 to 430, 432 to 454, 455 to 480, 482 to 502, 503 to 526, 527 to 550, 551 to 574, and 575 to 598; these read RRHV…VSHL, RLLQ…ISSL, SGLR…ISSG, VNLR…VTNL, TQLR…SWPV, EYLA…IGNL, TLRE…IGNL, SELV…IGKL, QKLD…ELGT, LSSL…FAEL, NLTL…IGDL, PELE…LGEN, GKLN…MCSG, LETL…LGKC, ESLT…LFGL, KLTQ…GGVS, VNLG…NFTG, QKLL…VGKL, QQLS…ISRC, KLLT…ITAM, KILN…ISSM, and QSLT…GQFS. N-linked (GlcNAc...) asparagine glycans are attached at residues Asn80, Asn97, Asn123, Asn130, Asn153, and Asn164. 2 N-linked (GlcNAc...) asparagine glycosylation sites follow: Asn212 and Asn237. Asn312 and Asn346 each carry an N-linked (GlcNAc...) asparagine glycan. N-linked (GlcNAc...) asparagine glycosylation occurs at Asn420. Asn477 carries N-linked (GlcNAc...) asparagine glycosylation. N-linked (GlcNAc...) asparagine glycans are attached at residues Asn557, Asn586, and Asn601. Residues 641-661 traverse the membrane as a helical segment; that stretch reads KLLLVLGLLVCSIAFAVVAII. Topologically, residues 662–1003 are cytoplasmic; that stretch reads KARSLKKASE…VQSPPDLLNL (342 aa). Thr686 is subject to Phosphothreonine. Residues 694–971 enclose the Protein kinase domain; the sequence is LKEDNIIGKG…VQILTEIPKL (278 aa). ATP-binding positions include 700–708 and Lys722; that span reads IGKGGAGIV. Tyr769 and Tyr807 each carry phosphotyrosine. The active-site Proton acceptor is the Asp820. Ser855 carries the post-translational modification Phosphoserine. 2 positions are modified to phosphotyrosine: Tyr863 and Tyr870. Position 871 is a phosphothreonine (Thr871). Residues 969-1003 are disordered; it reads PKLPPSKDQPMTESAPESELSPKSGVQSPPDLLNL. Phosphoserine is present on Ser996.

The protein belongs to the protein kinase superfamily. Ser/Thr protein kinase family. In terms of assembly, self-interacts and interacts with BAM2 and CLV1. Binds to the CLV3, CLE5, CLE11, CLE18, CLE19, CLE22, CLE25, CLE26, CLE40, CLE41 and CLE42 mature peptides, probably via its extracellular leucine-rich repeat region. In terms of tissue distribution, expressed in seedlings, roots, leaves, inflorescences, flowers and siliques.

Its subcellular location is the cell membrane. The catalysed reaction is L-seryl-[protein] + ATP = O-phospho-L-seryl-[protein] + ADP + H(+). It carries out the reaction L-threonyl-[protein] + ATP = O-phospho-L-threonyl-[protein] + ADP + H(+). Functionally, necessary for male gametophyte development, as well as ovule specification and function. Involved in cell-cell communication process required during early anther development, and regulating cell division and differentiation to organize cell layers. Required for the development of high-ordered vascular strands within the leaf and a correlated control of leaf shape, size and symmetry. May regulate the CLV1-dependent CLV3-mediated signaling in meristems maintenance. The polypeptide is Leucine-rich repeat receptor-like serine/threonine-protein kinase BAM1 (BAM1) (Arabidopsis thaliana (Mouse-ear cress)).